Here is a 299-residue protein sequence, read N- to C-terminus: Putative ammonium transporter 4 member 1 (299 aa).

5 consecutive transmembrane segments (helical) span residues 16 to 36 (AWPLAAATLVGLQSVPRLVIL), 59 to 79 (VLLTLAGAGLLLWMGWTGFNG), 104 to 124 (LLVWLLLDSFVFGRLSVISAV), 158 to 178 (VLHTHGVAGSLSGVLTGLLLL), and 218 to 238 (AGIAFVVALNVAVTSAVCLAV).

This sequence belongs to the ammonia transporter channel (TC 1.A.11.2) family.

It localises to the membrane. The polypeptide is Putative ammonium transporter 4 member 1 (AMT4-1) (Oryza sativa subsp. japonica (Rice)).